Here is a 243-residue protein sequence, read N- to C-terminus: Sarcospan (243 aa).

The interval 1-43 (MGKNKQPRGQQRQGGPPAADAAGPDDMEPKKGTGAPKECGEEE) is disordered. The Cytoplasmic portion of the chain corresponds to 1–53 (MGKNKQPRGQQRQGGPPAADAAGPDDMEPKKGTGAPKECGEEEPRTCCGCRFP). The segment covering 7-24 (PRGQQRQGGPPAADAAGP) has biased composition (low complexity). A helical transmembrane segment spans residues 54–74 (LLLALLQLALGIAVTVVGFLM). The Extracellular segment spans residues 75 to 86 (ASISSSLLVRDT). Residues 87–107 (PFWAGIIVCLVAYLGLFMLCV) form a helical membrane-spanning segment. Over 108-122 (SYQVDERTCIQFSMK) the chain is Cytoplasmic. A helical transmembrane segment spans residues 123-143 (LLYFLLSALGLTVCVLAVAFA). At 144–193 (AHHYSQLTQFTCETTLDSCQCKLPSSEPLSRTFVYRDVTDCTSVTGTFKL) the chain is on the extracellular side. Residues 194-214 (FLLIQMILNLVCGLVCLLACF) traverse the membrane as a helical segment. The Cytoplasmic portion of the chain corresponds to 215-243 (VMWKHRYQVFYVGVRICSLTASEGPQQKI).

Isoform 1 is expressed exclusively in heart and skeletal muscle. Isoform 2 is expressed in heart, skeletal muscle, thymus, prostate, testis, ovary, small intestine, colon and spleen.

The protein localises to the cell membrane. The protein resides in the sarcolemma. It localises to the postsynaptic cell membrane. Its function is as follows. Component of the dystrophin-glycoprotein complex (DGC), a complex that spans the muscle plasma membrane and forms a link between the F-actin cytoskeleton and the extracellular matrix. Preferentially associates with the sarcoglycan subcomplex of the DGC. This is Sarcospan (SSPN) from Homo sapiens (Human).